The chain runs to 565 residues: DNA mismatch repair protein MutL (565 aa).

This sequence belongs to the DNA mismatch repair MutL/HexB family.

This protein is involved in the repair of mismatches in DNA. It is required for dam-dependent methyl-directed DNA mismatch repair. May act as a 'molecular matchmaker', a protein that promotes the formation of a stable complex between two or more DNA-binding proteins in an ATP-dependent manner without itself being part of a final effector complex. This chain is DNA mismatch repair protein MutL, found in Desulforudis audaxviator (strain MP104C).